The sequence spans 188 residues: dCTP deaminase (188 aa).

DCTP-binding positions include 111-116 (KSTYAR), 135-137 (TLE), Gln-156, Tyr-170, Lys-179, and Gln-180. Glu-137 acts as the Proton donor/acceptor in catalysis.

The protein belongs to the dCTP deaminase family. In terms of assembly, homotrimer.

The enzyme catalyses dCTP + H2O + H(+) = dUTP + NH4(+). It participates in pyrimidine metabolism; dUMP biosynthesis; dUMP from dCTP (dUTP route): step 1/2. Functionally, catalyzes the deamination of dCTP to dUTP. This is dCTP deaminase from Orientia tsutsugamushi (strain Boryong) (Rickettsia tsutsugamushi).